Reading from the N-terminus, the 397-residue chain is L-aspartate--L-methionine ligase (397 aa).

One can recognise an ATP-grasp domain in the interval 131–347 (VALNNKARIP…FFNTILKYVK (217 aa)). ADP-binding residues include Lys136, Val171, Lys173, Gly183, Val186, Ile188, Glu215, Gln216, Ile218, Asn223, and Thr246. Asp288 provides a ligand contact to Mg(2+). Residues Leu290 and Ile300 each coordinate ADP. Position 301 (Asp301) interacts with Mg(2+). Arg305 functions as the Critical for catalysis in the catalytic mechanism.

In terms of assembly, primarily a monomer in solution. Minor homodimer formation. Requires Mg(2+) as cofactor.

The enzyme catalyses L-aspartate + L-methionine + ATP = L-aspartyl-L-methionine + ADP + phosphate + H(+). The protein operates within amino-acid metabolism. L-amino acid ligase, which preferentially catalyzes the formation of L-aspartyl-L-methionine dipeptide from L-aspartate and L-methionine in the presence of ATP. Less active with L-asparagine and L-methionine as substrates. Less active with L-aspartate and either L-phenylalanine, L-valine, L-leucine or L-isoleucine as substrates. Decreased activity when L-methionine is substituted with seleno-DL-methionine, L-homocysteine, L-methionine sulfoxide, L-methionine sulfoximine and o-acetyl-L-serine. Decreased activity with acetylation of L-methionine amino group. Decreased activity by modification of L-methionine carboxylate to L-methionine methyl ester. No activity when L-methionine is substituted with L-homoserine. No activity with formylation of L-methionine amino group. No activity by modification of L-methionine carboxylate to L-methionine-glycine carboxylate. No activity when L-aspartate substrate is replaced by analogs such as L-homoserine, DL-aspartate beta-methyl ester, L-glutamate or o-acetyl-L-serine. No activity when L-aspartate amino and alpha-carboxylate groups are modified to L-malate, glycine-L-aspartate, L-aspartate-glycine or N-carbamoyl-DL-aspartate. No activity with L-methionine or L-aspartate as sole substrates. No activity in presence of other nucleoside triphosphates including GTP, CTP, UTP, TTP or ITP. Involved in sulfur amino acid metabolism. This is L-aspartate--L-methionine ligase from Staphylococcus aureus (strain NCTC 8325 / PS 47).